The following is a 132-amino-acid chain: MSMTDNVADMLTRIRNAYKSKLINVSFPSSKIKTSILDVLQKEGYIKDYVTTQKNNISYAEVALKYSVNGDASICEIHRVSKPGKRVYSAIKALKGYYNNMGIYILSTPYGVMSDREAHIKNVGGEVICKVF.

This sequence belongs to the universal ribosomal protein uS8 family. Part of the 30S ribosomal subunit. Contacts proteins S5 and S12.

Functionally, one of the primary rRNA binding proteins, it binds directly to 16S rRNA central domain where it helps coordinate assembly of the platform of the 30S subunit. The protein is Small ribosomal subunit protein uS8 of Rickettsia akari (strain Hartford).